The primary structure comprises 498 residues: Probable malate:quinone oxidoreductase (498 aa).

Belongs to the MQO family. It depends on FAD as a cofactor.

It catalyses the reaction (S)-malate + a quinone = a quinol + oxaloacetate. It functions in the pathway carbohydrate metabolism; tricarboxylic acid cycle; oxaloacetate from (S)-malate (quinone route): step 1/1. This is Probable malate:quinone oxidoreductase from Granulibacter bethesdensis (strain ATCC BAA-1260 / CGDNIH1).